The following is a 580-amino-acid chain: MFS-type transporter thnB (580 aa).

Positions 1-33 (MSGDYSATRKSENVDTSTTASQEDSSLAPEQPE) are disordered. The span at 14 to 25 (VDTSTTASQEDS) shows a compositional bias: polar residues. Transmembrane regions (helical) follow at residues 60-80 (LITL…DQTI), 92-112 (FHGL…LGGF), 125-145 (LKIS…ICGV), 157-177 (AIAG…LAFS), 188-208 (STMG…GGAF), 216-236 (WCFY…FLFF), and 259-279 (VGTV…QYAG). Asn-285 carries an N-linked (GlcNAc...) asparagine glycan. 7 helical membrane passes run 286-306 (SSVV…LAAW), 331-351 (IFQF…PIYF), 364-384 (VDNL…GAAV), 389-409 (MATP…GLLY), 421-441 (IGYQ…ALNI), 457-477 (SLYF…QAAF), and 529-549 (FAVS…MVMI).

The protein belongs to the major facilitator superfamily.

It localises to the membrane. Its function is as follows. MFS-type transporter; part of the gene cluster that produces the tetronate natural products trihazones. The sequence is that of MFS-type transporter thnB from Trichoderma harzianum (Hypocrea lixii).